Reading from the N-terminus, the 315-residue chain is Acetyl-coenzyme A carboxylase carboxyl transferase subunit alpha (315 aa).

Residues 32-293 (NISDEIARLQ…RADLVQQLDM (262 aa)) enclose the CoA carboxyltransferase C-terminal domain.

The protein belongs to the AccA family. Acetyl-CoA carboxylase is a heterohexamer composed of biotin carboxyl carrier protein (AccB), biotin carboxylase (AccC) and two subunits each of ACCase subunit alpha (AccA) and ACCase subunit beta (AccD).

The protein resides in the cytoplasm. The enzyme catalyses N(6)-carboxybiotinyl-L-lysyl-[protein] + acetyl-CoA = N(6)-biotinyl-L-lysyl-[protein] + malonyl-CoA. The protein operates within lipid metabolism; malonyl-CoA biosynthesis; malonyl-CoA from acetyl-CoA: step 1/1. Its function is as follows. Component of the acetyl coenzyme A carboxylase (ACC) complex. First, biotin carboxylase catalyzes the carboxylation of biotin on its carrier protein (BCCP) and then the CO(2) group is transferred by the carboxyltransferase to acetyl-CoA to form malonyl-CoA. This Pseudomonas putida (strain ATCC 47054 / DSM 6125 / CFBP 8728 / NCIMB 11950 / KT2440) protein is Acetyl-coenzyme A carboxylase carboxyl transferase subunit alpha.